The following is a 33-amino-acid chain: Sucrose-6-phosphate hydrolase (33 aa).

15–18 is a substrate binding site; that stretch reads PLQE. The active site involves E18.

The protein belongs to the glycosyl hydrolase 32 family.

It catalyses the reaction Hydrolysis of terminal non-reducing beta-D-fructofuranoside residues in beta-D-fructofuranosides.. It functions in the pathway glycan biosynthesis; sucrose metabolism. The polypeptide is Sucrose-6-phosphate hydrolase (Fusobacterium mortiferum).